Here is a 351-residue protein sequence, read N- to C-terminus: Type II methyltransferase M.DsaV (351 aa).

The 307-residue stretch at 6 to 312 folds into the SAM-dependent MTase C5-type domain; that stretch reads LKFIDLFAGI…QKMLSYIDLT (307 aa). Cys-75 is an active-site residue.

Belongs to the class I-like SAM-binding methyltransferase superfamily. C5-methyltransferase family.

It catalyses the reaction a 2'-deoxycytidine in DNA + S-adenosyl-L-methionine = a 5-methyl-2'-deoxycytidine in DNA + S-adenosyl-L-homocysteine + H(+). Functionally, a methylase, recognizes the double-stranded sequence 5'-CCNGG-3', methylates C-2 on both strands, and protects the DNA from cleavage by the DsaV endonuclease. The chain is Type II methyltransferase M.DsaV from Dactylococcopsis salina (Myxobaktron salinum).